Consider the following 354-residue polypeptide: UDP-N-acetylglucosamine--N-acetylmuramyl-(pentapeptide) pyrophosphoryl-undecaprenol N-acetylglucosamine transferase (354 aa).

Positions 196 and 288 each coordinate UDP-N-acetyl-alpha-D-glucosamine.

The protein belongs to the glycosyltransferase 28 family. MurG subfamily.

It is found in the cell membrane. It catalyses the reaction Mur2Ac(oyl-L-Ala-gamma-D-Glu-L-Lys-D-Ala-D-Ala)-di-trans,octa-cis-undecaprenyl diphosphate + UDP-N-acetyl-alpha-D-glucosamine = beta-D-GlcNAc-(1-&gt;4)-Mur2Ac(oyl-L-Ala-gamma-D-Glu-L-Lys-D-Ala-D-Ala)-di-trans,octa-cis-undecaprenyl diphosphate + UDP + H(+). Its pathway is cell wall biogenesis; peptidoglycan biosynthesis. Its function is as follows. Cell wall formation. Catalyzes the transfer of a GlcNAc subunit on undecaprenyl-pyrophosphoryl-MurNAc-pentapeptide (lipid intermediate I) to form undecaprenyl-pyrophosphoryl-MurNAc-(pentapeptide)GlcNAc (lipid intermediate II). This is UDP-N-acetylglucosamine--N-acetylmuramyl-(pentapeptide) pyrophosphoryl-undecaprenol N-acetylglucosamine transferase from Streptococcus suis (strain 98HAH33).